The primary structure comprises 201 residues: Small ribosomal subunit protein uS4 (201 aa).

An S4 RNA-binding domain is found at 91–155 (SRLDNVVYRA…STLPFQVARE (65 aa)).

It belongs to the universal ribosomal protein uS4 family. As to quaternary structure, part of the 30S ribosomal subunit. Contacts protein S5. The interaction surface between S4 and S5 is involved in control of translational fidelity.

In terms of biological role, one of the primary rRNA binding proteins, it binds directly to 16S rRNA where it nucleates assembly of the body of the 30S subunit. Functionally, with S5 and S12 plays an important role in translational accuracy. This is Small ribosomal subunit protein uS4 from Rhodococcus jostii (strain RHA1).